Here is a 477-residue protein sequence, read N- to C-terminus: Cytochrome P450 monooxygenase poxC (477 aa).

A helical transmembrane segment spans residues 24 to 41 (AWHFAVLSFVYVIARSIY). Residue cysteine 420 participates in heme binding.

Belongs to the cytochrome P450 family. Heme is required as a cofactor.

It localises to the membrane. It participates in secondary metabolite biosynthesis. Its function is as follows. Cytochrome P450 monooxygenase; part of the gene cluster that mediates the biosynthesis of oxaleimides, cytotoxic compounds containing an unusual disubstituted succinimide moiety. The first step of the pathway is provided by the HR-PKS poxF that serves in a new mode of collaborative biosynthesis with the PKS-NRPS poxE, by providing the olefin containing amino acid substrate via the synthesis of an ACP-bound dec-4-enoate. The cytochrome P450 monooxygenase poxM-catalyzed oxidation at the alpha-position creates the enzyme-bound 2-hydroxydec-4-enoyl-ACP thioester, which may be prone to spontaneous hydrolysis to yield 2-hydroxydec-4-enoic acid due to increased electrophilicity of the carbonyl. 2-hydroxydec-4-enoic acid can then be further oxidized by poxM to yield the alpha-ketoacid 2-oxodec-4-enoicacid, which is reductively aminated by the aminotransferase poxL to yield (S,E)-2-aminodec-4-enoic acid. The Hybrid PKS-NRPS synthetase poxE then performs condensation between the octaketide product of its PKS modules and the amino group of (S,E)-2-aminodec-4-enoic acid which is activated and incorporated by the adenylation domain. The resulting aminoacyl product can be cyclized by the Diels-Alderase PoxQ and reductively released by the reductive (R) domain of poxE to yield an aldehyde intermediate. The released aldehyde is then substrate for a Knoevenagel condensation by the hydrolyase poxO followed by an oxidation at the 5-position of the pyrrolidone ring. The presence of the olefin from the amino acid building block allows for migration of the substituted allyl group to occur. This allylic transposition reaction takes place in a conjugate addition, semipinacol-like fashion to yield a succinimide intermediate. Iterative two-electron oxidations of the C7 methyl of the succinimide intermediate to the carboxylic acid can be catalyzed by one of two remaining cytochrome P450 monooxygenasess poxC or poxD to yield oxaleimide A. Subsequent oxidation yields the maleimide scaffold oxaleimide I. Both oxaleimide A and oxaleimide I can undergo oxidative modifications in the decalin ring to yield the series of products oxaleimides B to H. The chain is Cytochrome P450 monooxygenase poxC from Penicillium oxalicum (strain 114-2 / CGMCC 5302) (Penicillium decumbens).